A 288-amino-acid polypeptide reads, in one-letter code: Ribosome biogenesis GTPase A (288 aa).

The CP-type G domain maps to 14–179 (RRQVTEKLKL…LLDTPGILWP (166 aa)). Residues 58 to 61 (NKVD), 131 to 136 (NVGKST), and Gly-175 each bind GTP.

This sequence belongs to the TRAFAC class YlqF/YawG GTPase family. MTG1 subfamily. Interacts with ctc. Interacts with the immature 50S ribosome subunit. 2 molecules of rbgA bind to one 50S subunit.

The protein localises to the cytoplasm. Functionally, essential protein that is required for a late step of 50S ribosomal subunit assembly. Has GTPase activity that is stimulated by interaction with the immature 50S ribosome subunit. Binds to the 23S rRNA. Required for the association of ribosomal proteins rplP and rpmA with the large subunit. This chain is Ribosome biogenesis GTPase A, found in Priestia megaterium (strain DSM 319 / IMG 1521) (Bacillus megaterium).